The sequence spans 328 residues: 4-hydroxythreonine-4-phosphate dehydrogenase (328 aa).

Residues H133 and T134 each coordinate substrate. Residues H163, H208, and H263 each coordinate a divalent metal cation. 3 residues coordinate substrate: K271, N280, and R289.

This sequence belongs to the PdxA family. As to quaternary structure, homodimer. Requires Zn(2+) as cofactor. It depends on Mg(2+) as a cofactor. Co(2+) serves as cofactor.

It localises to the cytoplasm. The enzyme catalyses 4-(phosphooxy)-L-threonine + NAD(+) = 3-amino-2-oxopropyl phosphate + CO2 + NADH. It participates in cofactor biosynthesis; pyridoxine 5'-phosphate biosynthesis; pyridoxine 5'-phosphate from D-erythrose 4-phosphate: step 4/5. In terms of biological role, catalyzes the NAD(P)-dependent oxidation of 4-(phosphooxy)-L-threonine (HTP) into 2-amino-3-oxo-4-(phosphooxy)butyric acid which spontaneously decarboxylates to form 3-amino-2-oxopropyl phosphate (AHAP). This Chromobacterium violaceum (strain ATCC 12472 / DSM 30191 / JCM 1249 / CCUG 213 / NBRC 12614 / NCIMB 9131 / NCTC 9757 / MK) protein is 4-hydroxythreonine-4-phosphate dehydrogenase.